A 268-amino-acid polypeptide reads, in one-letter code: uncharacterized protein (268 aa).

It belongs to the LarE family.

This is an uncharacterized protein from Synechocystis sp. (strain ATCC 27184 / PCC 6803 / Kazusa).